The primary structure comprises 125 residues: Glycine cleavage system H protein (125 aa).

Residues 19–101 (VGTVGISDYA…EGAAWFFKLT (83 aa)) enclose the Lipoyl-binding domain. An N6-lipoyllysine modification is found at Lys-60.

Belongs to the GcvH family. As to quaternary structure, the glycine cleavage system is composed of four proteins: P, T, L and H. Requires (R)-lipoate as cofactor.

In terms of biological role, the glycine cleavage system catalyzes the degradation of glycine. The H protein shuttles the methylamine group of glycine from the P protein to the T protein. The sequence is that of Glycine cleavage system H protein from Paramagnetospirillum magneticum (strain ATCC 700264 / AMB-1) (Magnetospirillum magneticum).